The sequence spans 465 residues: tRNA modification GTPase MnmE (465 aa).

Positions 21, 85, and 124 each coordinate (6S)-5-formyl-5,6,7,8-tetrahydrofolate. The region spanning 220–387 (GVPVAIIGET…LQQRLVAAAH (168 aa)) is the TrmE-type G domain. A K(+)-binding site is contributed by Asn230. GTP is bound by residues 230–235 (NAGKST), 249–255 (SDIHGTT), and 274–277 (DTAG). Residue Ser234 participates in Mg(2+) binding. K(+) is bound by residues Ser249, Ile251, and Thr254. Mg(2+) is bound at residue Thr255. Lys465 is a (6S)-5-formyl-5,6,7,8-tetrahydrofolate binding site.

This sequence belongs to the TRAFAC class TrmE-Era-EngA-EngB-Septin-like GTPase superfamily. TrmE GTPase family. As to quaternary structure, homodimer. Heterotetramer of two MnmE and two MnmG subunits. K(+) serves as cofactor.

The protein localises to the cytoplasm. Its function is as follows. Exhibits a very high intrinsic GTPase hydrolysis rate. Involved in the addition of a carboxymethylaminomethyl (cmnm) group at the wobble position (U34) of certain tRNAs, forming tRNA-cmnm(5)s(2)U34. This Bacteroides fragilis (strain ATCC 25285 / DSM 2151 / CCUG 4856 / JCM 11019 / LMG 10263 / NCTC 9343 / Onslow / VPI 2553 / EN-2) protein is tRNA modification GTPase MnmE.